The following is a 133-amino-acid chain: Complexin-1 (133 aa).

2 disordered regions span residues 1–40 (MDFV…RLEA) and 85–112 (AMEA…DEEE). A compositionally biased stretch (basic and acidic residues) spans 15-40 (DMGKMLGGDEEKDPDAEKKEEERLEA). Positions 28 to 60 (PDAEKKEEERLEALRQAEEERAGKYAKMEAERE) form a coiled coil.

The protein belongs to the complexin/synaphin family. In terms of assembly, binds to the SNARE core complex containing SNAP25, VAMP2 and syntaxin-1. As to expression, nervous system. Present in electric organ (at protein level).

It localises to the cytoplasm. The protein resides in the cytosol. In terms of biological role, positively regulates a late step in synaptic vesicle exocytosis. This chain is Complexin-1, found in Narke japonica (Japanese sleeper ray).